The chain runs to 25 residues: Aurein-5.2 (25 aa).

In terms of tissue distribution, expressed by the skin dorsal glands.

It localises to the secreted. Has antimicrobial activity against L.lactis and S.uberis. The protein is Aurein-5.2 of Ranoidea raniformis (Southern bell frog).